A 264-amino-acid chain; its full sequence is THAP domain-containing protein 10 (264 aa).

The THAP-type zinc-finger motif lies at 1 to 90; that stretch reads MPARCVAAHC…LVAGAVPTLH (90 aa). 2 disordered regions span residues 90–136 and 160–195; these read HRVP…PRAG and TQPH…KRPR. A compositionally biased stretch (basic and acidic residues) spans 99–122; it reads GGEEGDQAGRPDTRGELQAARHSE. Positions 160 to 175 are enriched in polar residues; the sequence is TQPHADNPSNTVTSVP.

In Pongo abelii (Sumatran orangutan), this protein is THAP domain-containing protein 10 (THAP10).